The chain runs to 213 residues: Protein MobE (213 aa).

The chain is Protein MobE (mobE) from Acidithiobacillus ferrooxidans (Thiobacillus ferrooxidans).